Reading from the N-terminus, the 499-residue chain is Lysine--tRNA ligase (499 aa).

Mg(2+) contacts are provided by Glu408 and Glu415.

Belongs to the class-II aminoacyl-tRNA synthetase family. As to quaternary structure, homodimer. Mg(2+) is required as a cofactor.

It is found in the cytoplasm. The enzyme catalyses tRNA(Lys) + L-lysine + ATP = L-lysyl-tRNA(Lys) + AMP + diphosphate. In Bacillus cereus (strain B4264), this protein is Lysine--tRNA ligase.